A 55-amino-acid polypeptide reads, in one-letter code: Male-specific sperm protein Mst84Dc (55 aa).

Belongs to the MST(3)CGP family. Testis.

This is Male-specific sperm protein Mst84Dc (Mst84Dc) from Drosophila melanogaster (Fruit fly).